The following is a 200-amino-acid chain: Segregation and condensation protein B (200 aa).

It belongs to the ScpB family. As to quaternary structure, homodimer. Homodimerization may be required to stabilize the binding of ScpA to the Smc head domains. Component of a cohesin-like complex composed of ScpA, ScpB and the Smc homodimer, in which ScpA and ScpB bind to the head domain of Smc. The presence of the three proteins is required for the association of the complex with DNA.

The protein localises to the cytoplasm. Its function is as follows. Participates in chromosomal partition during cell division. May act via the formation of a condensin-like complex containing Smc and ScpA that pull DNA away from mid-cell into both cell halves. The polypeptide is Segregation and condensation protein B (Lactobacillus delbrueckii subsp. bulgaricus (strain ATCC 11842 / DSM 20081 / BCRC 10696 / JCM 1002 / NBRC 13953 / NCIMB 11778 / NCTC 12712 / WDCM 00102 / Lb 14)).